An 875-amino-acid chain; its full sequence is GATOR2 complex protein MIOS (875 aa).

6 WD repeats span residues 58 to 100 (SDTP…NSKF), 111 to 155 (KHAR…TPDI), 182 to 221 (GQNDACLSLCWLPRDQKLLLAGMHRNLAIFDLRNTSQKMF), 223 to 261 (NTKAVQGVTVDPYFHDRVASFYEGQVAIWDLRKFEKPVL), 265 to 306 (EQPK…TPIG), and 395 to 437 (RLRA…KQYT). The C4-type zinc finger occupies 735 to 781 (VSCNFCGKSISYSCSAVPHQGRGFSQYGVSGSPTKSKVTSCPGCRKP). Zn(2+) is bound by residues Cys-737 and Cys-740. Phosphoserine occurs at positions 759 and 766. Residues Cys-775, Cys-778, Cys-788, Cys-827, Cys-830, His-832, His-835, His-838, Cys-849, Cys-854, and Cys-858 each contribute to the Zn(2+) site. The RING-type; atypical zinc finger occupies 782-863 (LPRCALCLIN…CTCKCMQLDT (82 aa)).

This sequence belongs to the WD repeat mio family. In terms of assembly, component of the GATOR2 subcomplex, composed of MIOS, SEC13, SEH1L, WDR24 and WDR59. The GATOR2 complex interacts with CASTOR1 and CASTOR2; the interaction is negatively regulated by arginine. CASTOR1 and CASTOR2 convey leucine availability via direct interaction with MIOS. The GATOR2 complex interacts with SESN1, SESN2 and SESN3; the interaction is negatively regulated by amino acids. Interacts with SAR1A and SAR1B; the interaction is direct, disrupted by leucine and mediates the interaction of SAR1A or SAR1B with the GATOR2 complex to negatively regulate the TORC1 signaling upon leucine deprivation.

Its subcellular location is the lysosome membrane. Its activity is regulated as follows. The GATOR2 complex is negatively regulated by the upstream amino acid sensors CASTOR1 and SESN2, which sequester the GATOR2 complex in absence of amino acids. In the presence of abundant amino acids, GATOR2 is released from CASTOR1 and SESN2 and activated. Its function is as follows. As a component of the GATOR2 complex, functions as an activator of the amino acid-sensing branch of the mTORC1 signaling pathway. The GATOR2 complex indirectly activates mTORC1 through the inhibition of the GATOR1 subcomplex. GATOR2 probably acts as an E3 ubiquitin-protein ligase toward GATOR1. In the presence of abundant amino acids, the GATOR2 complex mediates ubiquitination of the NPRL2 core component of the GATOR1 complex, leading to GATOR1 inactivation. In the absence of amino acids, GATOR2 is inhibited, activating the GATOR1 complex. Within the GATOR2 complex, MIOS is required to prevent autoubiquitination of WDR24, the catalytic subunit of the complex. The GATOR2 complex is required for brain myelination. The chain is GATOR2 complex protein MIOS from Homo sapiens (Human).